The following is a 222-amino-acid chain: MSETAPAETTAPAPVEKSPAKKKTKKAGAAKRKATGPPVSELITKAVSASKERGGVSLPALKKALAAGGYDVEKNNSRIKLGLKSLVSKGTLVQTKGTGASGSFKLNKKVASGEAKPKAKKTGAAKAKKPTGATPKKPKKTAGAKKTVKKTPKKAKKPAAAGVKKVTKSPKKAKAAAKPKKATKSPARPKAVKSKASKPKVTKPKAAKPKAAKVKKAVSKKK.

The segment covering 1–16 (MSETAPAETTAPAPVE) has biased composition (low complexity). A disordered region spans residues 1 to 55 (MSETAPAETTAPAPVEKSPAKKKTKKAGAAKRKATGPPVSELITKAVSASKERGG). N-acetylserine is present on Ser-2. Ser-2 is modified (phosphoserine). An N6-acetyllysine modification is found at Lys-17. The residue at position 18 (Ser-18) is a Phosphoserine. Positions 20–34 (AKKKTKKAGAAKRKA) are enriched in basic residues. Lys-26 is subject to N6-methyllysine. Lys-33 bears the N6-(beta-hydroxybutyryl)lysine; alternate mark. Lys-33 carries the post-translational modification N6-succinyllysine; alternate. Phosphothreonine is present on Thr-35. The 74-residue stretch at 35-108 (TGPPVSELIT…GASGSFKLNK (74 aa)) folds into the H15 domain. Lys-45 carries the post-translational modification N6-acetyllysine. Lys-51 bears the N6-(beta-hydroxybutyryl)lysine mark. Arg-53 carries the post-translational modification Citrulline. Lys-63 bears the N6-(beta-hydroxybutyryl)lysine mark. At Lys-74 the chain carries N6-acetyllysine. An N6-(beta-hydroxybutyryl)lysine mark is found at Lys-84, Lys-89, and Lys-105. The interval 94–222 (QTKGTGASGS…KVKKAVSKKK (129 aa)) is disordered. Basic residues predominate over residues 118-129 (KAKKTGAAKAKK). 2 positions are modified to phosphothreonine: Thr-134 and Thr-151. Residues 136 to 157 (KKPKKTAGAKKTVKKTPKKAKK) are compositionally biased toward basic residues. Lys-164 carries the post-translational modification N6-acetyllysine. The span at 165-183 (KVTKSPKKAKAAAKPKKAT) shows a compositional bias: basic residues. Residues Ser-169 and Ser-185 each carry the phosphoserine modification. Residues 190–222 (KAVKSKASKPKVTKPKAAKPKAAKVKKAVSKKK) are compositionally biased toward basic residues.

The protein belongs to the histone H1/H5 family. As to quaternary structure, interacts with MSX1. In terms of processing, H1 histones are progressively phosphorylated during the cell cycle, becoming maximally phosphorylated during late G2 phase and M phase, and being dephosphorylated sharply thereafter. Post-translationally, citrullination at Arg-53 (H1R54ci) by PADI4 takes place within the DNA-binding site of H1 and results in its displacement from chromatin and global chromatin decondensation, thereby promoting pluripotency and stem cell maintenance.

It is found in the nucleus. Its subcellular location is the chromosome. Functionally, histone H1 protein binds to linker DNA between nucleosomes forming the macromolecular structure known as the chromatin fiber. Histones H1 are necessary for the condensation of nucleosome chains into higher-order structured fibers. Also acts as a regulator of individual gene transcription through chromatin remodeling, nucleosome spacing and DNA methylation. In Rattus norvegicus (Rat), this protein is Histone H1.5 (H1-5).